The sequence spans 349 residues: Farnesyl pyrophosphate synthase (349 aa).

The isopentenyl diphosphate site is built by K48, R51, and Q90. Mg(2+) is bound by residues D97 and D101. R106 provides a ligand contact to dimethylallyl diphosphate. Isopentenyl diphosphate is bound at residue R107. Positions 194, 195, 234, 251, and 260 each coordinate dimethylallyl diphosphate.

It belongs to the FPP/GGPP synthase family. Mg(2+) serves as cofactor.

Its subcellular location is the cytoplasm. It carries out the reaction isopentenyl diphosphate + dimethylallyl diphosphate = (2E)-geranyl diphosphate + diphosphate. The catalysed reaction is isopentenyl diphosphate + (2E)-geranyl diphosphate = (2E,6E)-farnesyl diphosphate + diphosphate. It participates in isoprenoid biosynthesis; farnesyl diphosphate biosynthesis; farnesyl diphosphate from geranyl diphosphate and isopentenyl diphosphate: step 1/1. It functions in the pathway isoprenoid biosynthesis; geranyl diphosphate biosynthesis; geranyl diphosphate from dimethylallyl diphosphate and isopentenyl diphosphate: step 1/1. Functionally, catalyzes the sequential condensation of isopentenyl pyrophosphate with the allylic pyrophosphates, dimethylallyl pyrophosphate, and then with the resultant geranylpyrophosphate to the ultimate product farnesyl pyrophosphate. This Kluyveromyces lactis (strain ATCC 8585 / CBS 2359 / DSM 70799 / NBRC 1267 / NRRL Y-1140 / WM37) (Yeast) protein is Farnesyl pyrophosphate synthase (FPS1).